Here is a 352-residue protein sequence, read N- to C-terminus: Adenosine deaminase (352 aa).

Residues His24 and His26 each coordinate Zn(2+). Residues His26, Asp28, and Gly181 each coordinate substrate. His208 is a binding site for Zn(2+). The Proton donor role is filled by Glu211. Asp290 serves as a coordination point for Zn(2+).

Belongs to the metallo-dependent hydrolases superfamily. Adenosine and AMP deaminases family. Adenosine deaminase subfamily. The cofactor is Zn(2+).

It carries out the reaction adenosine + H2O + H(+) = inosine + NH4(+). The catalysed reaction is 2'-deoxyadenosine + H2O + H(+) = 2'-deoxyinosine + NH4(+). Functionally, catalyzes the hydrolytic deamination of adenosine and 2-deoxyadenosine. This chain is Adenosine deaminase, found in Lactococcus lactis subsp. lactis (strain IL1403) (Streptococcus lactis).